A 95-amino-acid polypeptide reads, in one-letter code: uncharacterized protein (95 aa).

3 consecutive transmembrane segments (helical) span residues 3–23 (YTVL…GFSF), 35–55 (ILFL…MMLT), and 63–83 (MLGV…VMII).

It localises to the cell membrane. This is an uncharacterized protein from Mycoplasma pneumoniae (strain ATCC 29342 / M129 / Subtype 1) (Mycoplasmoides pneumoniae).